A 312-amino-acid polypeptide reads, in one-letter code: Malate dehydrogenase (312 aa).

NAD(+)-binding positions include 7–13 and Asp-34; that span reads GAAGGIG. Positions 81 and 87 each coordinate substrate. Residues Asn-94 and 117–119 each bind NAD(+); that span reads ITN. Substrate is bound by residues Asn-119 and Arg-153. Catalysis depends on His-177, which acts as the Proton acceptor. NAD(+) is bound at residue Met-227.

It belongs to the LDH/MDH superfamily. MDH type 1 family. As to quaternary structure, homodimer.

It catalyses the reaction (S)-malate + NAD(+) = oxaloacetate + NADH + H(+). In terms of biological role, catalyzes the reversible oxidation of malate to oxaloacetate. This chain is Malate dehydrogenase, found in Klebsiella pneumoniae (strain 342).